The chain runs to 345 residues: Skn-1 dependent zygotic transcript 15 protein (345 aa).

The region spanning 11 to 55 (AFGLHKLPHLVSDKVVKSMVPMELFTYSMVAEETKALVKRLFKKV) is the F-box domain.

Its function is as follows. May have a role in embryogenesis. The protein is Skn-1 dependent zygotic transcript 15 protein (sdz-15) of Caenorhabditis elegans.